The following is an 859-amino-acid chain: DNA mismatch repair protein MutS (859 aa).

ATP is bound at residue 618-625 (GPNMGGKS). Residues 803 to 829 (RDHDVQQNTEQQGTQQNMSFVPSAPSP) are disordered. Residues 808 to 819 (QQNTEQQGTQQN) show a composition bias toward low complexity.

This sequence belongs to the DNA mismatch repair MutS family.

Its function is as follows. This protein is involved in the repair of mismatches in DNA. It is possible that it carries out the mismatch recognition step. This protein has a weak ATPase activity. The sequence is that of DNA mismatch repair protein MutS from Shewanella pealeana (strain ATCC 700345 / ANG-SQ1).